The primary structure comprises 275 residues: NADPH-dependent 7-cyano-7-deazaguanine reductase (275 aa).

81-83 (IES) provides a ligand contact to substrate. 83–84 (SK) serves as a coordination point for NADPH. Cys-181 (thioimide intermediate) is an active-site residue. Catalysis depends on Asp-188, which acts as the Proton donor. 220 to 221 (HE) lines the substrate pocket. Residue 249 to 250 (RG) coordinates NADPH.

Belongs to the GTP cyclohydrolase I family. QueF type 2 subfamily. In terms of assembly, homodimer.

The protein localises to the cytoplasm. The enzyme catalyses 7-aminomethyl-7-carbaguanine + 2 NADP(+) = 7-cyano-7-deazaguanine + 2 NADPH + 3 H(+). It functions in the pathway tRNA modification; tRNA-queuosine biosynthesis. Catalyzes the NADPH-dependent reduction of 7-cyano-7-deazaguanine (preQ0) to 7-aminomethyl-7-deazaguanine (preQ1). In Xylella fastidiosa (strain 9a5c), this protein is NADPH-dependent 7-cyano-7-deazaguanine reductase.